The primary structure comprises 195 residues: Large ribosomal subunit protein uL5 (195 aa).

Belongs to the universal ribosomal protein uL5 family. Part of the 50S ribosomal subunit; part of the 5S rRNA/L5/L18/L25 subcomplex. Contacts the 5S rRNA and the P site tRNA. Forms a bridge to the 30S subunit in the 70S ribosome.

Its function is as follows. This is one of the proteins that bind and probably mediate the attachment of the 5S RNA into the large ribosomal subunit, where it forms part of the central protuberance. In the 70S ribosome it contacts protein S13 of the 30S subunit (bridge B1b), connecting the 2 subunits; this bridge is implicated in subunit movement. Contacts the P site tRNA; the 5S rRNA and some of its associated proteins might help stabilize positioning of ribosome-bound tRNAs. The chain is Large ribosomal subunit protein uL5 from Chlorobium chlorochromatii (strain CaD3).